We begin with the raw amino-acid sequence, 356 residues long: UDP-N-acetylglucosamine--N-acetylmuramyl-(pentapeptide) pyrophosphoryl-undecaprenol N-acetylglucosamine transferase (356 aa).

UDP-N-acetyl-alpha-D-glucosamine contacts are provided by residues T12–G14, N124, R163, S188, I242, A261–E266, and Q287.

The protein belongs to the glycosyltransferase 28 family. MurG subfamily.

Its subcellular location is the cell inner membrane. It catalyses the reaction di-trans,octa-cis-undecaprenyl diphospho-N-acetyl-alpha-D-muramoyl-L-alanyl-D-glutamyl-meso-2,6-diaminopimeloyl-D-alanyl-D-alanine + UDP-N-acetyl-alpha-D-glucosamine = di-trans,octa-cis-undecaprenyl diphospho-[N-acetyl-alpha-D-glucosaminyl-(1-&gt;4)]-N-acetyl-alpha-D-muramoyl-L-alanyl-D-glutamyl-meso-2,6-diaminopimeloyl-D-alanyl-D-alanine + UDP + H(+). The protein operates within cell wall biogenesis; peptidoglycan biosynthesis. Its function is as follows. Cell wall formation. Catalyzes the transfer of a GlcNAc subunit on undecaprenyl-pyrophosphoryl-MurNAc-pentapeptide (lipid intermediate I) to form undecaprenyl-pyrophosphoryl-MurNAc-(pentapeptide)GlcNAc (lipid intermediate II). The sequence is that of UDP-N-acetylglucosamine--N-acetylmuramyl-(pentapeptide) pyrophosphoryl-undecaprenol N-acetylglucosamine transferase from Stutzerimonas stutzeri (strain A1501) (Pseudomonas stutzeri).